Here is a 335-residue protein sequence, read N- to C-terminus: Beta-ketoacyl-[acyl-carrier-protein] synthase III (335 aa).

Catalysis depends on residues Cys-118 and His-259. The ACP-binding stretch occupies residues 260–264; that stretch reads QANER. Residue Asn-289 is part of the active site.

It belongs to the thiolase-like superfamily. FabH family. Homodimer.

It localises to the cytoplasm. It carries out the reaction malonyl-[ACP] + acetyl-CoA + H(+) = 3-oxobutanoyl-[ACP] + CO2 + CoA. The protein operates within lipid metabolism; fatty acid biosynthesis. Its function is as follows. Catalyzes the condensation reaction of fatty acid synthesis by the addition to an acyl acceptor of two carbons from malonyl-ACP. Catalyzes the first condensation reaction which initiates fatty acid synthesis and may therefore play a role in governing the total rate of fatty acid production. Possesses both acetoacetyl-ACP synthase and acetyl transacylase activities. Its substrate specificity determines the biosynthesis of branched-chain and/or straight-chain of fatty acids. This is Beta-ketoacyl-[acyl-carrier-protein] synthase III from Chlamydia caviae (strain ATCC VR-813 / DSM 19441 / 03DC25 / GPIC) (Chlamydophila caviae).